The sequence spans 227 residues: 2-C-methyl-D-erythritol 4-phosphate cytidylyltransferase (227 aa).

It belongs to the IspD/TarI cytidylyltransferase family. IspD subfamily.

It carries out the reaction 2-C-methyl-D-erythritol 4-phosphate + CTP + H(+) = 4-CDP-2-C-methyl-D-erythritol + diphosphate. It participates in isoprenoid biosynthesis; isopentenyl diphosphate biosynthesis via DXP pathway; isopentenyl diphosphate from 1-deoxy-D-xylulose 5-phosphate: step 2/6. Functionally, catalyzes the formation of 4-diphosphocytidyl-2-C-methyl-D-erythritol from CTP and 2-C-methyl-D-erythritol 4-phosphate (MEP). In Dehalococcoides mccartyi (strain ATCC BAA-2266 / KCTC 15142 / 195) (Dehalococcoides ethenogenes (strain 195)), this protein is 2-C-methyl-D-erythritol 4-phosphate cytidylyltransferase.